A 145-amino-acid polypeptide reads, in one-letter code: D-aminoacyl-tRNA deacylase (145 aa).

Positions 137–138 (GP) match the Gly-cisPro motif, important for rejection of L-amino acids motif.

Belongs to the DTD family. Homodimer.

It is found in the cytoplasm. The enzyme catalyses glycyl-tRNA(Ala) + H2O = tRNA(Ala) + glycine + H(+). It carries out the reaction a D-aminoacyl-tRNA + H2O = a tRNA + a D-alpha-amino acid + H(+). Functionally, an aminoacyl-tRNA editing enzyme that deacylates mischarged D-aminoacyl-tRNAs. Also deacylates mischarged glycyl-tRNA(Ala), protecting cells against glycine mischarging by AlaRS. Acts via tRNA-based rather than protein-based catalysis; rejects L-amino acids rather than detecting D-amino acids in the active site. By recycling D-aminoacyl-tRNA to D-amino acids and free tRNA molecules, this enzyme counteracts the toxicity associated with the formation of D-aminoacyl-tRNA entities in vivo and helps enforce protein L-homochirality. The polypeptide is D-aminoacyl-tRNA deacylase (Stutzerimonas stutzeri (strain A1501) (Pseudomonas stutzeri)).